A 78-amino-acid chain; its full sequence is Conotoxin CaFr179 (78 aa).

The N-terminal stretch at 1 to 19 is a signal peptide; that stretch reads MSGLGIMVLTLLLLVFMEA. Residues 20-44 constitute a propeptide that is removed on maturation; sequence SHQDAGEKQATQRDAINVRRRRSLA. Intrachain disulfides connect Cys52/Cys64, Cys56/Cys72, and Cys63/Cys76. Residue Phe77 is modified to Phenylalanine amide.

This sequence belongs to the conotoxin O3 superfamily. As to expression, expressed by the venom duct.

It is found in the secreted. This is Conotoxin CaFr179 from Conus caracteristicus (Characteristic cone).